The chain runs to 120 residues: Cytochrome c2 iso-1 (120 aa).

The residue at position 1 (Gln-1) is a Pyrrolidone carboxylic acid. Residues Cys-15, Cys-18, His-19, and Met-98 each coordinate heme c.

It belongs to the cytochrome c family. Post-translationally, binds 1 heme c group covalently per subunit.

Its function is as follows. Cytochrome c2 is found mainly in purple, non-sulfur, photosynthetic bacteria where it functions as the electron donor to the oxidized bacteriochlorophyll in the photophosphorylation pathway. However, it may also have a role in the respiratory chain and is found in some non-photosynthetic bacteria. The chain is Cytochrome c2 iso-1 from Rhodospirillum centenum (Rhodocista centenaria).